A 221-amino-acid polypeptide reads, in one-letter code: 7-carboxy-7-deazaguanine synthase (221 aa).

Residues 12 to 14 (ING) and Arg27 each bind substrate. The Radical SAM core domain maps to 18 to 216 (KSGQLSVFIR…IQIHKIIWNP (199 aa)). [4Fe-4S] cluster contacts are provided by Cys31, Cys35, and Cys38. Residue Thr40 coordinates Mg(2+). Thr73 is a substrate binding site. Gly75 lines the S-adenosyl-L-methionine pocket.

Belongs to the radical SAM superfamily. 7-carboxy-7-deazaguanine synthase family. As to quaternary structure, homodimer. Requires [4Fe-4S] cluster as cofactor. S-adenosyl-L-methionine is required as a cofactor. It depends on Mg(2+) as a cofactor.

The enzyme catalyses 6-carboxy-5,6,7,8-tetrahydropterin + H(+) = 7-carboxy-7-deazaguanine + NH4(+). It participates in purine metabolism; 7-cyano-7-deazaguanine biosynthesis. In terms of biological role, catalyzes the complex heterocyclic radical-mediated conversion of 6-carboxy-5,6,7,8-tetrahydropterin (CPH4) to 7-carboxy-7-deazaguanine (CDG), a step common to the biosynthetic pathways of all 7-deazapurine-containing compounds. The protein is 7-carboxy-7-deazaguanine synthase of Clostridium acetobutylicum (strain ATCC 824 / DSM 792 / JCM 1419 / IAM 19013 / LMG 5710 / NBRC 13948 / NRRL B-527 / VKM B-1787 / 2291 / W).